Here is a 932-residue protein sequence, read N- to C-terminus: Lon protease homolog 2, peroxisomal (932 aa).

In terms of domain architecture, Lon N-terminal spans 11–259 (LALVPLPKGS…RVVELLARQV (249 aa)). A disordered region spans residues 304–340 (TGLTPPGAAGGRNNEDEKETNEVDELQKRLQEAELSP). Basic and acidic residues predominate over residues 328-340 (ELQKRLQEAELSP). An ATP-binding site is contributed by 486-493 (GPPGTGKT). The Lon proteolytic domain maps to 729 to 916 (HGRPGVVTGL…WEAIRQVWPG (188 aa)). Residues S822 and K865 contribute to the active site. Residues 930 to 932 (SRL) carry the Microbody targeting signal motif.

This sequence belongs to the peptidase S16 family.

Its subcellular location is the peroxisome matrix. The enzyme catalyses Hydrolysis of proteins in presence of ATP.. Its function is as follows. ATP-dependent serine protease that mediates the selective degradation of misfolded and unassembled polypeptides in the peroxisomal matrix. Necessary for type 2 peroxisome targeting signal (PTS2)-containing protein processing and facilitates peroxisome matrix protein import. The sequence is that of Lon protease homolog 2, peroxisomal from Aspergillus fumigatus (strain ATCC MYA-4609 / CBS 101355 / FGSC A1100 / Af293) (Neosartorya fumigata).